The following is a 151-amino-acid chain: MFRRPVLQVFRQFVRQESEVASSLVLERSLNRVQLLGRVGQDPVMRQVEGKNPVTIFSLATNEMWRSGDNEAYQMGDVSQKTTWHRISVFRPGLRDVAYQYVKKGARIFVEGKVDYGEYMDKNNVRRQATTIIADNIIFLSDQAREKPLNG.

The transit peptide at 1–16 directs the protein to the mitochondrion; it reads MFRRPVLQVFRQFVRQ. The SSB domain maps to 30-141; the sequence is LNRVQLLGRV…IIADNIIFLS (112 aa). Phosphoserine occurs at positions 67 and 79. Residue K113 is modified to N6-acetyllysine. Residue K122 is modified to N6-succinyllysine.

As to quaternary structure, homotetramer. Interacts with MPG/AAG, through inhibition of its glycosylase activity it potentially prevents formation of DNA breaks in ssDNA, ensuring that base removal primarily occurs in dsDNA. Interacts with POLDIP2. Interacts with PRIMPOL.

It is found in the mitochondrion. It localises to the mitochondrion matrix. The protein resides in the mitochondrion nucleoid. In terms of biological role, binds preferentially and cooperatively to pyrimidine rich single-stranded DNA (ss-DNA). In vitro, required to maintain the copy number of mitochondrial DNA (mtDNA) and plays a crucial role during mtDNA replication by stimulating the activity of the replisome components POLG and TWNK at the replication fork. Promotes the activity of the gamma complex polymerase POLG, largely by organizing the template DNA and eliminating secondary structures to favor ss-DNA conformations that facilitate POLG activity. In addition it is able to promote the 5'-3' unwinding activity of the mtDNA helicase TWNK. May also function in mtDNA repair. The chain is Single-stranded DNA-binding protein, mitochondrial (Ssbp1) from Rattus norvegicus (Rat).